The following is a 314-amino-acid chain: Ecto-ADP-ribosyltransferase 4 (314 aa).

The N-terminal stretch at 1–46 (MGPLINRCKKILLPTTVPPATMRIWLLGGLLPFLLLLSGLQRPTEG) is a signal peptide. 2 disulfide bridges follow: cysteine 69–cysteine 280 and cysteine 182–cysteine 231. In terms of domain architecture, TR mART core spans 91-276 (KNYFRMWQKA…LQLRSTGNLS (186 aa)). The N-linked (GlcNAc...) asparagine glycan is linked to asparagine 114. An NAD(+)-binding site is contributed by tyrosine 126. Asparagine 178 carries an N-linked (GlcNAc...) asparagine glycan. Glutamine 206 provides a ligand contact to NAD(+). Residue asparagine 222 is glycosylated (N-linked (GlcNAc...) asparagine). An NAD(+)-binding site is contributed by serine 240. Residues asparagine 257 and asparagine 274 are each glycosylated (N-linked (GlcNAc...) asparagine). Residue alanine 285 is the site of GPI-anchor amidated alanine attachment. Positions 286–314 (SSKKCIPDPIAIASLSFLTSVIIFSKSRV) are cleaved as a propeptide — removed in mature form.

It belongs to the Arg-specific ADP-ribosyltransferase family. In terms of tissue distribution, expressed in spleen and T-cells.

The protein resides in the cell membrane. The catalysed reaction is L-arginyl-[protein] + NAD(+) = N(omega)-(ADP-D-ribosyl)-L-arginyl-[protein] + nicotinamide + H(+). This Homo sapiens (Human) protein is Ecto-ADP-ribosyltransferase 4 (ART4).